Here is a 220-residue protein sequence, read N- to C-terminus: Putative tyrosine-protein phosphatase 1 (220 aa).

The Tyrosine-protein phosphatase domain maps to 67 to 218 (FKVPLNAELF…LLARKHVRGQ (152 aa)).

It belongs to the protein-tyrosine phosphatase family. Non-receptor class CDC14 subfamily.

The enzyme catalyses O-phospho-L-tyrosyl-[protein] + H2O = L-tyrosyl-[protein] + phosphate. Functionally, could be inactive as the active site cysteine is modified to tryptophan. This is Putative tyrosine-protein phosphatase 1 (PTP-1) from Orgyia pseudotsugata multicapsid polyhedrosis virus (OpMNPV).